The primary structure comprises 245 residues: 1-(5-phosphoribosyl)-5-[(5-phosphoribosylamino)methylideneamino] imidazole-4-carboxamide isomerase (245 aa).

Catalysis depends on aspartate 7, which acts as the Proton acceptor. The Proton donor role is filled by aspartate 129.

Belongs to the HisA/HisF family.

The protein localises to the cytoplasm. It catalyses the reaction 1-(5-phospho-beta-D-ribosyl)-5-[(5-phospho-beta-D-ribosylamino)methylideneamino]imidazole-4-carboxamide = 5-[(5-phospho-1-deoxy-D-ribulos-1-ylimino)methylamino]-1-(5-phospho-beta-D-ribosyl)imidazole-4-carboxamide. The protein operates within amino-acid biosynthesis; L-histidine biosynthesis; L-histidine from 5-phospho-alpha-D-ribose 1-diphosphate: step 4/9. The polypeptide is 1-(5-phosphoribosyl)-5-[(5-phosphoribosylamino)methylideneamino] imidazole-4-carboxamide isomerase (Shewanella frigidimarina (strain NCIMB 400)).